A 276-amino-acid chain; its full sequence is Rhomboid protease GlpG (276 aa).

6 helical membrane passes run glycine 94–leucine 114, alanine 142–glycine 162, leucine 169–glutamine 189, phenylalanine 192–tryptophan 212, leucine 229–methionine 249, and alanine 250–leucine 270. The active-site Nucleophile is serine 201. Residue histidine 254 is part of the active site.

This sequence belongs to the peptidase S54 family.

It is found in the cell inner membrane. The catalysed reaction is Cleaves type-1 transmembrane domains using a catalytic dyad composed of serine and histidine that are contributed by different transmembrane domains.. Functionally, rhomboid-type serine protease that catalyzes intramembrane proteolysis. The sequence is that of Rhomboid protease GlpG from Shigella flexneri serotype 5b (strain 8401).